The following is a 650-amino-acid chain: Sterol O-acyltransferase 2 (650 aa).

The disordered stretch occupies residues 41–79; the sequence is LTSSNNSCASEHEGEGEGEDERPATTSSAPTQNHSAGDV. Residues 64-75 are compositionally biased toward polar residues; that stretch reads ATTSSAPTQNHS. Helical transmembrane passes span 223 to 243, 300 to 320, 412 to 432, 450 to 470, and 493 to 513; these read FSGL…KALI, TGWA…MYLT, INVS…QIEY, IFGT…PVAM, and LLVD…YLIW. An FYXDWWN motif motif is present at residues 531 to 537; sequence FYGDWWN. A run of 2 helical transmembrane segments spans residues 575–595 and 630–650; these read ATLM…YVIF and VIFW…YLTF. The active site involves H587.

Belongs to the membrane-bound acyltransferase family. Sterol o-acyltransferase subfamily.

It is found in the endoplasmic reticulum membrane. Sterol O-acyltransferase that catalyzes the formation of stery esters. In Saccharomyces uvarum (strain ATCC 76518 / CBS 7001 / CLIB 283 / NBRC 10550 / MCYC 623 / NCYC 2669 / NRRL Y-11845) (Yeast), this protein is Sterol O-acyltransferase 2 (ARE2).